The primary structure comprises 897 residues: Translation initiation factor IF-2 (897 aa).

Disordered regions lie at residues 69 to 88 and 95 to 304; these read RKTK…KEVQ and RTYV…NAMK. Residues 101 to 161 show a composition bias toward basic and acidic residues; sequence SALEDEQRQA…EEKARIEAQQ (61 aa). The segment covering 162–179 has biased composition (low complexity); that stretch reads KARQAQQPAKAAGSTAQQ. Basic and acidic residues-rich tracts occupy residues 180-196, 203-217, 226-239, and 277-286; these read EAEK…KRQQ, KAEE…EARV, WAEE…ESSD, and RREDDRDARN. Residues 287–296 are compositionally biased toward basic residues; the sequence is PRARKGKRGK. Residues 397-566 form the tr-type G domain; the sequence is PRAPVVTIMG…LIQSEVLELK (170 aa). Residues 406 to 413 are G1; sequence GHVDHGKT. 406–413 contacts GTP; sequence GHVDHGKT. The segment at 431–435 is G2; the sequence is GITQH. The G3 stretch occupies residues 452–455; sequence DTPG. GTP contacts are provided by residues 452–456 and 506–509; these read DTPGH and NKID. Residues 506-509 are G4; the sequence is NKID. Residues 542–544 are G5; the sequence is SAK.

Belongs to the TRAFAC class translation factor GTPase superfamily. Classic translation factor GTPase family. IF-2 subfamily.

Its subcellular location is the cytoplasm. Functionally, one of the essential components for the initiation of protein synthesis. Protects formylmethionyl-tRNA from spontaneous hydrolysis and promotes its binding to the 30S ribosomal subunits. Also involved in the hydrolysis of GTP during the formation of the 70S ribosomal complex. This chain is Translation initiation factor IF-2, found in Aeromonas hydrophila subsp. hydrophila (strain ATCC 7966 / DSM 30187 / BCRC 13018 / CCUG 14551 / JCM 1027 / KCTC 2358 / NCIMB 9240 / NCTC 8049).